A 158-amino-acid polypeptide reads, in one-letter code: Transcription elongation factor GreA (158 aa).

A coiled-coil region spans residues Gln49–Gln73.

The protein belongs to the GreA/GreB family.

Its function is as follows. Necessary for efficient RNA polymerase transcription elongation past template-encoded arresting sites. The arresting sites in DNA have the property of trapping a certain fraction of elongating RNA polymerases that pass through, resulting in locked ternary complexes. Cleavage of the nascent transcript by cleavage factors such as GreA or GreB allows the resumption of elongation from the new 3'terminus. GreA releases sequences of 2 to 3 nucleotides. The chain is Transcription elongation factor GreA from Methylococcus capsulatus (strain ATCC 33009 / NCIMB 11132 / Bath).